Consider the following 756-residue polypeptide: MSDRFELFLTCPKGLEGLLIEEAVGLGLEEAREHTSAVRGMATMETAYRLCLWSRLANRVLLVLKRFPMKNAEDLYHGVLDVDWQDHMLADGTLAVEFSGHGSGIDNTHFGALKVKDAIVDKLRTPQGDRPSIDKLNPDLRIHLRLDRGEAILSLDLSGHSLHQRGYRLQQGAAPLKENLAAAILIRSGWPRIAAEGGALADPMCGVGTFLVEAGMIAADMAPNLRREQWGFTAWLGHVPALWKKLHEEAVERAAAGLAKPPLWIRGYEADPRLIQPGRNNVERAGLSEWIKIYQGEVATFEPRPDQNQKGLVICNPPYGERLGDEASLLYLYQNLGERLRQACLNWEAAVFTGAPDLGKRMGIRSHKQYSFWNGALPCKLLLIKVLPDQFVTGERRTPEQRQAEREQAAYDQTPNEPQERKFNKNGNPIKPTPAPAPVIEQPRLSEGGQMFANRLQKNLKAMSKWVKREGIDCYRVYDADMPEYAMAIDLYHDWVHVQEYAAPKSIDPEKASIRMFDALAAIPQALNIDKSRVVVKRRERQSGTKQYERQAAQGKFNEVTEGGVKLLVNLTDYLDTGLFLDHRPMRMRIQKEAAGKRFLNLFCYTATASVHAAKGGARSTTSVDLSKTYLDWARRNLSLNGFSDKNRLEQGDVMAWLENCREEYDLIFIDPPTFSNSKRMEGIFDVQRDQVQLIDLAMARLASGGVLYFSNNFRKFQLEDNLAERYAVEEITASTIDPDFARNGKIHRAWKITAR.

A THUMP domain is found at 46–157; it reads TAYRLCLWSR…RGEAILSLDL (112 aa). The segment covering 395–409 has biased composition (basic and acidic residues); sequence ERRTPEQRQAEREQA. The disordered stretch occupies residues 395–441; that stretch reads ERRTPEQRQAEREQAAYDQTPNEPQERKFNKNGNPIKPTPAPAPVIE.

Belongs to the methyltransferase superfamily. RlmKL family.

Its subcellular location is the cytoplasm. The catalysed reaction is guanosine(2445) in 23S rRNA + S-adenosyl-L-methionine = N(2)-methylguanosine(2445) in 23S rRNA + S-adenosyl-L-homocysteine + H(+). The enzyme catalyses guanosine(2069) in 23S rRNA + S-adenosyl-L-methionine = N(2)-methylguanosine(2069) in 23S rRNA + S-adenosyl-L-homocysteine + H(+). Its function is as follows. Specifically methylates the guanine in position 2445 (m2G2445) and the guanine in position 2069 (m7G2069) of 23S rRNA. This chain is Ribosomal RNA large subunit methyltransferase K/L, found in Pseudomonas fluorescens (strain Pf0-1).